The chain runs to 85 residues: Large ribosomal subunit protein bL31B (85 aa).

This sequence belongs to the bacterial ribosomal protein bL31 family. Type B subfamily. In terms of assembly, part of the 50S ribosomal subunit.

The protein is Large ribosomal subunit protein bL31B of Staphylococcus saprophyticus subsp. saprophyticus (strain ATCC 15305 / DSM 20229 / NCIMB 8711 / NCTC 7292 / S-41).